Reading from the N-terminus, the 892-residue chain is DNA mismatch repair protein MutS (892 aa).

The segment at 663–684 (TNTSLREAAPTTTLSTSDQGQM) is disordered. 696–703 (GPNASGKS) lines the ATP pocket.

This sequence belongs to the DNA mismatch repair MutS family.

Its function is as follows. This protein is involved in the repair of mismatches in DNA. It is possible that it carries out the mismatch recognition step. This protein has a weak ATPase activity. The chain is DNA mismatch repair protein MutS from Nostoc punctiforme (strain ATCC 29133 / PCC 73102).